Here is a 129-residue protein sequence, read N- to C-terminus: Small ribosomal subunit protein uS9 (129 aa).

It belongs to the universal ribosomal protein uS9 family.

This chain is Small ribosomal subunit protein uS9, found in Chlorobium phaeovibrioides (strain DSM 265 / 1930) (Prosthecochloris vibrioformis (strain DSM 265)).